Here is a 159-residue protein sequence, read N- to C-terminus: Putative esterase DR_2406 (159 aa).

It belongs to the thioesterase PaaI family.

This chain is Putative esterase DR_2406, found in Deinococcus radiodurans (strain ATCC 13939 / DSM 20539 / JCM 16871 / CCUG 27074 / LMG 4051 / NBRC 15346 / NCIMB 9279 / VKM B-1422 / R1).